The sequence spans 392 residues: Anhydro-N-acetylmuramic acid kinase (392 aa).

22–29 (GTSMDGVD) provides a ligand contact to ATP.

This sequence belongs to the anhydro-N-acetylmuramic acid kinase family.

The enzyme catalyses 1,6-anhydro-N-acetyl-beta-muramate + ATP + H2O = N-acetyl-D-muramate 6-phosphate + ADP + H(+). The protein operates within amino-sugar metabolism; 1,6-anhydro-N-acetylmuramate degradation. It functions in the pathway cell wall biogenesis; peptidoglycan recycling. Functionally, catalyzes the specific phosphorylation of 1,6-anhydro-N-acetylmuramic acid (anhMurNAc) with the simultaneous cleavage of the 1,6-anhydro ring, generating MurNAc-6-P. Is required for the utilization of anhMurNAc either imported from the medium or derived from its own cell wall murein, and thus plays a role in cell wall recycling. The protein is Anhydro-N-acetylmuramic acid kinase of Burkholderia mallei (strain NCTC 10229).